The following is a 421-amino-acid chain: Protein OS-9 homolog (421 aa).

The N-terminal stretch at 1–26 is a signal peptide; the sequence is MWRWSTGVRTMLGYAMCFLALGSALT. Positions 99–220 constitute an MRH domain; that stretch reads EEATVGKKLE…LVSIPSLCEL (122 aa). Trp-115 is an a mannooligosaccharide derivative binding site. N-linked (GlcNAc...) asparagine glycosylation occurs at Asn-125. Cystine bridges form between Cys-173-Cys-206 and Cys-188-Cys-218. Residues Arg-180, Glu-202, and Tyr-208 each coordinate a mannooligosaccharide derivative. 2 N-linked (GlcNAc...) asparagine glycosylation sites follow: Asn-271 and Asn-332. The span at 375–394 shows a compositional bias: acidic residues; sequence GNSEDYEQQAPEQLDEEEAE. The disordered stretch occupies residues 375–403; sequence GNSEDYEQQAPEQLDEEEAELTSQSDDPA.

Belongs to the OS-9 family. Interacts with missfolded ER lumenal proteins.

The protein resides in the endoplasmic reticulum membrane. Its function is as follows. Lectin involved in the quality control of the secretory pathway. As a member of the endoplasmic reticulum-associated degradation lumenal (ERAD-L) surveillance system, targets misfolded endoplasmic reticulum lumenal glycoproteins for degradation. In Eremothecium gossypii (strain ATCC 10895 / CBS 109.51 / FGSC 9923 / NRRL Y-1056) (Yeast), this protein is Protein OS-9 homolog (YOS9).